Here is a 591-residue protein sequence, read N- to C-terminus: Probable metalloprotease ARX1 (591 aa).

Belongs to the peptidase M24 family. In terms of assembly, component of the nucleoplasmic and cytoplasmic pre-60S ribosomal particles.

It localises to the cytoplasm. The protein localises to the nucleus. Its function is as follows. Probable metalloprotease involved in proper assembly of pre-ribosomal particles during the biogenesis of the 60S ribosomal subunit. Accompanies the pre-60S particles to the cytoplasm. The polypeptide is Probable metalloprotease ARX1 (ARX1) (Eremothecium gossypii (strain ATCC 10895 / CBS 109.51 / FGSC 9923 / NRRL Y-1056) (Yeast)).